The chain runs to 382 residues: Na(+)/H(+) antiporter NhaA (382 aa).

Helical transmembrane passes span 14-34, 47-67, 87-107, 117-137, 146-166, 171-191, 205-225, 247-267, 271-291, 321-341, and 353-373; these read AGGI…NSAM, FGMS…FLLI, IFPA…YVAF, GWAI…ALLG, VFLL…IALF, LSTI…MLNA, LILW…GVVI, ALHP…NAGI, GVSL…GLFL, IFAV…ISSL, and YARL…YSLL.

It belongs to the NhaA Na(+)/H(+) (TC 2.A.33) antiporter family.

It localises to the cell inner membrane. The enzyme catalyses Na(+)(in) + 2 H(+)(out) = Na(+)(out) + 2 H(+)(in). In terms of biological role, na(+)/H(+) antiporter that extrudes sodium in exchange for external protons. This chain is Na(+)/H(+) antiporter NhaA, found in Vibrio cholerae serotype O1 (strain ATCC 39541 / Classical Ogawa 395 / O395).